The sequence spans 1407 residues: E3 ubiquitin-protein ligase linker protein MMS1 (1407 aa).

Residues 1–600 (MLGLRTHGLD…QFQIFRHLRI (600 aa)) form a required for interaction with MMS22 region. A Phosphothreonine modification is found at Thr-1294.

In terms of assembly, component of multiple cullin-RING ligases (CRLs) composed of 4 subunits: the RING protein HRT1, the cullin RTT101, a linker protein MMS1, and one of many alternative substrate receptors belonging to a protein family described as DCAF (DDB1- and CUL4-associated factor). Component of a RTT101(MMS1-MMS22) complex with the substrate receptor MMS22. This complex further interacts with RTT107 and CTF4 to form RTT101-MMS1-MMS22-RTT107 and RTT101-MMS1-MMS22-CTF4 complexes respectively. Component of a RTT101(MSS1-CRT10) complex with the substrate receptor CRT10. Component of a RTT101(MSS1-ESC2) complex with the potential substrate receptor ESC2. Component of a RTT101(MSS1-ORC5) complex with the potential substrate receptor ORC5. Interacts with RTT101 (via N-ter). Interacts (via N-ter) with MMS22 (via C-ter). Interacts with CRT10.

The protein resides in the nucleus. Component of multiple cullin-RING-based E3 ubiquitin-protein ligase complexes (CRLs), which mediate the ubiquitination of target proteins. The CRL associates with CDC34 as the E2 ubiquitin-conjugating enzyme. The functional specificity of the CRL depends on the type of the associated substrate receptor protein. RTT101(MMS1-MMS22) promotes fork progression through damaged DNA or natural pause sites by stabilizing replication proteins like the replication fork-pausing complex (FPC) and leading-strand polymerase at stalled replication forks. RTT101(MMS1-MMS22) ubiquitinates the acetylated histones H3K56ac-H4 at lysine residues H3K121, H3K122 and H3K125. Ubiquitination is required for efficient histone deposition during replication-coupled nucleosome assembly, probably by facilitating the transfer of H3-H4 from ASF1 to other chaperones involved in histone deposition. RTT101(MMS1-CRT10) may regulate nucleotide synthesis through transcriptional regulation of ribonucleotide reductase. RTT101(MMS1) is also involved in the non-functional rRNA decay (NRD) of 25S rRNA through the selective, ubiquitination-dependent degradation of nonfunctional ribosomal particles. Involved in the regulation of TY1 transposition. The chain is E3 ubiquitin-protein ligase linker protein MMS1 (MMS1) from Saccharomyces cerevisiae (strain ATCC 204508 / S288c) (Baker's yeast).